The primary structure comprises 893 residues: MDKQSTFQDPKEKHRIQRDVKLSRPRKRFSFLDYVVVIFLTVVAFCVRAQRLMNPAKVVFEELRYYNYAVDYVNNKLLMDVYPPLGKLLFSLVAALTGNKYELNTLDEPGQQYPFTDVAYSMRLFTCLLGSLLVPLMYGTVYFPTKSKTAASLAALFVIFDNGLITMSRYIMIEIPALYFMSLTAFYWSVYEAQQKRPFSLRWHTSLLSTGVALGLALSTKLSAMFTFGWLLILAAFHLWNLLGDLSVPMYRIVKHLFSYIFYLIGVPITVYLAVFAVHSHIAYKASVADAFLPPEHRHALAGNRFDDQFADVAYGSLVTIRNAIPEHGYLHSSELLYPEGTEQQIISLVDEPNQNALWIIEHEHSQDNNRSNIELLKDGSVVRLRHVMTGRALHSHEHKPIVSNNDWQLEASAYGGFGFEGDANDLFRIQILEKKSKHATSNGTVETLNTKFRLIHVFANCELMSSHRRFPDWGDYQREVTCCRNCVERSTTWFIESNYHDGLPSDSRKITYRKPGFLESFVEHNKLMWLKDRKMGDGHVYESSALTWPLLLGPLRFFYEQHLQVFFMGNPFVWYSVISLVAFFVIVQIFCLARWNLGYNDFGPSAFHYNYNIGKFVVAWLLHWAPYILETDRVFLYHYLPALYFGIAALGVSWSFLGNAVFGNRTAYKALSVIIMALMFLVYRLYSPFTYMTTLTKSSCRALELKGSWNFHCNTYLDNLSDYKFSSDAGETYFEKAAPHPFVYSEDTAKKSEGDTPLNKNLNDYYPSWDQRVEAGYKLAAQQKAEQEAREAAEKAASEAAERSSSEAAASSSSESVAAASVEAERLAMEADEFNGASETVDGASVEAERSAMEAAALNNAAESTEVVGSSPESVASEQEENVAESAQARVE.

7 helical membrane-spanning segments follow: residues 29 to 49, 77 to 97, 124 to 144, 147 to 167, 170 to 190, 224 to 244, and 258 to 278; these read FSFL…CVRA, LLMD…AALT, LFTC…VYFP, SKTA…LITM, YIMI…YWSV, AMFT…NLLG, and FSYI…VFAV. Positions 310-364 constitute an MIR 1 domain; that stretch reads FADVAYGSLVTIRNAIPEHGYLHSSELLYPEGTEQQIISLVDEPNQNALWIIEHE. Residue N370 is glycosylated (N-linked (GlcNAc...) asparagine). MIR domains are found at residues 374–433 and 443–499; these read IELL…IQIL and NGTV…IESN. Residue N443 is glycosylated (N-linked (GlcNAc...) asparagine). At T451 the chain carries Phosphothreonine. Transmembrane regions (helical) follow at residues 573 to 593, 610 to 630, and 643 to 663; these read FVWY…IFCL, YNYN…PYIL, and ALYF…NAVF. N-linked (GlcNAc...) asparagine glycosylation is present at N665. The helical transmembrane segment at 671–691 threads the bilayer; that stretch reads ALSVIIMALMFLVYRLYSPFT. An N-linked (GlcNAc...) asparagine glycan is attached at N720. Residues 785–893 form a disordered region; that stretch reads KAEQEAREAA…VAESAQARVE (109 aa). Residues 786–806 show a composition bias toward basic and acidic residues; it reads AEQEAREAAEKAASEAAERSS. Composition is skewed to low complexity over residues 807 to 823 and 854 to 864; these read SEAA…AASV and MEAAALNNAAE. A compositionally biased stretch (polar residues) spans 868 to 878; it reads VVGSSPESVAS.

Belongs to the glycosyltransferase 39 family.

The protein resides in the endoplasmic reticulum membrane. Its subcellular location is the nucleus membrane. It carries out the reaction a di-trans,poly-cis-dolichyl beta-D-mannosyl phosphate + L-seryl-[protein] = 3-O-(alpha-D-mannosyl)-L-seryl-[protein] + a di-trans,poly-cis-dolichyl phosphate + H(+). It catalyses the reaction a di-trans,poly-cis-dolichyl beta-D-mannosyl phosphate + L-threonyl-[protein] = 3-O-(alpha-D-mannosyl)-L-threonyl-[protein] + a di-trans,poly-cis-dolichyl phosphate + H(+). Its pathway is protein modification; protein glycosylation. Functionally, transfers mannose from Dol-P-mannose to Ser or Thr residues on proteins. Required for normal cell growth and septum formation. Shown to actively O-mannosylate wsc1. The protein is Dolichyl-phosphate-mannose--protein mannosyltransferase 1 (ogm1) of Schizosaccharomyces pombe (strain 972 / ATCC 24843) (Fission yeast).